A 152-amino-acid polypeptide reads, in one-letter code: MIYYVIALFVIAIDQISKWLIVKNMELGTSIPIIDNVLYITSHRNRGAAWGILENKMWFFYIITVVFVVFIVFYMKKYAKTDKLLGISLGLILGGAIGNFIDRVFRQEVVDFIHVYIFSYNYPVFNIADSALCIGVVLIIIQTLLEGKKAKE.

Helical transmembrane passes span 55 to 75 (NKMWFFYIITVVFVVFIVFYM) and 85 to 105 (LGISLGLILGGAIGNFIDRVF). Residues D111 and D129 contribute to the active site. Residues 124–144 (VFNIADSALCIGVVLIIIQTL) traverse the membrane as a helical segment.

It belongs to the peptidase A8 family.

It localises to the cell membrane. It catalyses the reaction Release of signal peptides from bacterial membrane prolipoproteins. Hydrolyzes -Xaa-Yaa-Zaa-|-(S,diacylglyceryl)Cys-, in which Xaa is hydrophobic (preferably Leu), and Yaa (Ala or Ser) and Zaa (Gly or Ala) have small, neutral side chains.. It functions in the pathway protein modification; lipoprotein biosynthesis (signal peptide cleavage). Its function is as follows. This protein specifically catalyzes the removal of signal peptides from prolipoproteins. The chain is Lipoprotein signal peptidase from Bacillus cereus (strain G9842).